Reading from the N-terminus, the 459-residue chain is Chromosomal replication initiator protein DnaA (459 aa).

The domain I, interacts with DnaA modulators stretch occupies residues 1–73; that stretch reads MEIPIESLWS…AHAVQDILGH (73 aa). The segment at 73-117 is domain II; sequence HPVGIYITVAQGDEVSHFSEREVSWESTNPSSIPESLPHHNHKTT. The segment at 118-334 is domain III, AAA+ region; sequence ELNSKYVFSR…GALIRAVAYI (217 aa). ATP is bound by residues glycine 162, glycine 164, lysine 165, and threonine 166. The tract at residues 335-459 is domain IV, binds dsDNA; sequence SIWGLPMTVE…INMTSRSQKS (125 aa).

Belongs to the DnaA family. Oligomerizes as a right-handed, spiral filament on DNA at oriC.

The protein localises to the cytoplasm. Its function is as follows. Plays an essential role in the initiation and regulation of chromosomal replication. ATP-DnaA binds to the origin of replication (oriC) to initiate formation of the DNA replication initiation complex once per cell cycle. Binds the DnaA box (a 9 base pair repeat at the origin) and separates the double-stranded (ds)DNA. Forms a right-handed helical filament on oriC DNA; dsDNA binds to the exterior of the filament while single-stranded (ss)DNA is stabiized in the filament's interior. The ATP-DnaA-oriC complex binds and stabilizes one strand of the AT-rich DNA unwinding element (DUE), permitting loading of DNA polymerase. After initiation quickly degrades to an ADP-DnaA complex that is not apt for DNA replication. Binds acidic phospholipids. This Nostoc punctiforme (strain ATCC 29133 / PCC 73102) protein is Chromosomal replication initiator protein DnaA.